Reading from the N-terminus, the 215-residue chain is MATPGFPSTEQRLGLYPVVDSLLWIERLLAAGVTTLQLRIKNADDAQVEQDIVAAIELGKRYQARLFINDYWQLAVKHGAYGVHLGQEDLETADLAAIQQAGLRLGISTHDEHELAVAKTLRPSYIALGHIFPTQTKQMPSSPQGLASLSRQVKNTPDYPTVAIGGISIERVPHVLATGVGSVAVVSAITLASDWQRATAQLLHLIEGKELADEK.

4-amino-2-methyl-5-(diphosphooxymethyl)pyrimidine-binding positions include 37–41 (QLRIK) and Asn69. Positions 70 and 89 each coordinate Mg(2+). Residue Ser108 coordinates 4-amino-2-methyl-5-(diphosphooxymethyl)pyrimidine. A 2-[(2R,5Z)-2-carboxy-4-methylthiazol-5(2H)-ylidene]ethyl phosphate-binding site is contributed by 134–136 (TQT). Lys137 lines the 4-amino-2-methyl-5-(diphosphooxymethyl)pyrimidine pocket. 2-[(2R,5Z)-2-carboxy-4-methylthiazol-5(2H)-ylidene]ethyl phosphate-binding positions include Gly166 and 186–187 (VS).

This sequence belongs to the thiamine-phosphate synthase family. Mg(2+) serves as cofactor.

It carries out the reaction 2-[(2R,5Z)-2-carboxy-4-methylthiazol-5(2H)-ylidene]ethyl phosphate + 4-amino-2-methyl-5-(diphosphooxymethyl)pyrimidine + 2 H(+) = thiamine phosphate + CO2 + diphosphate. The enzyme catalyses 2-(2-carboxy-4-methylthiazol-5-yl)ethyl phosphate + 4-amino-2-methyl-5-(diphosphooxymethyl)pyrimidine + 2 H(+) = thiamine phosphate + CO2 + diphosphate. It catalyses the reaction 4-methyl-5-(2-phosphooxyethyl)-thiazole + 4-amino-2-methyl-5-(diphosphooxymethyl)pyrimidine + H(+) = thiamine phosphate + diphosphate. Its pathway is cofactor biosynthesis; thiamine diphosphate biosynthesis; thiamine phosphate from 4-amino-2-methyl-5-diphosphomethylpyrimidine and 4-methyl-5-(2-phosphoethyl)-thiazole: step 1/1. Condenses 4-methyl-5-(beta-hydroxyethyl)thiazole monophosphate (THZ-P) and 2-methyl-4-amino-5-hydroxymethyl pyrimidine pyrophosphate (HMP-PP) to form thiamine monophosphate (TMP). This chain is Thiamine-phosphate synthase, found in Yersinia pseudotuberculosis serotype I (strain IP32953).